The primary structure comprises 714 residues: Fatty acid oxidation complex subunit alpha (714 aa).

Residues 1-190 (MEMASAFTLN…KLGLVDDVVP (190 aa)) form an enoyl-CoA hydratase region. The segment at 306–714 (APLNSVGILG…FWKTTATDLQ (409 aa)) is 3-hydroxyacyl-CoA dehydrogenase.

This sequence in the N-terminal section; belongs to the enoyl-CoA hydratase/isomerase family. The protein in the central section; belongs to the 3-hydroxyacyl-CoA dehydrogenase family. As to quaternary structure, heterotetramer of two alpha chains (FadJ) and two beta chains (FadI).

The protein resides in the cytoplasm. It carries out the reaction a (3S)-3-hydroxyacyl-CoA = a (2E)-enoyl-CoA + H2O. The enzyme catalyses a 4-saturated-(3S)-3-hydroxyacyl-CoA = a (3E)-enoyl-CoA + H2O. The catalysed reaction is a (3S)-3-hydroxyacyl-CoA + NAD(+) = a 3-oxoacyl-CoA + NADH + H(+). It catalyses the reaction (3S)-3-hydroxybutanoyl-CoA = (3R)-3-hydroxybutanoyl-CoA. Its pathway is lipid metabolism; fatty acid beta-oxidation. Functionally, catalyzes the formation of a hydroxyacyl-CoA by addition of water on enoyl-CoA. Also exhibits 3-hydroxyacyl-CoA epimerase and 3-hydroxyacyl-CoA dehydrogenase activities. The protein is Fatty acid oxidation complex subunit alpha of Escherichia coli (strain SMS-3-5 / SECEC).